We begin with the raw amino-acid sequence, 396 residues long: 3-amino-4-hydroxybenzoate 2-monooxygenase PtmB3 (396 aa).

FAD-binding positions include Ala19, Glu38–Gln39, and Arg112. Residue Tyr217 is the Proton acceptor of the active site. An FAD-binding site is contributed by Asp295. Residues Arg352–Arg371 form a disordered region.

The protein belongs to the 6-hydroxynicotinate 3-monooxygenase family. Requires FAD as cofactor.

The catalysed reaction is 3-amino-4-hydroxybenzoate + NADPH + O2 + H(+) = 3-amino-2,4-dihydroxybenzoate + NADP(+) + H2O. The protein operates within antibiotic biosynthesis. In terms of biological role, part of a gene cluster involved in the biosynthesis of thioplatensimycin (thioPTM) and platensimycin (PTM), potent and selective inhibitors of bacterial and mammalian fatty acid synthases. Catalyzes the hydroxylation of 3-amino-4-hydroxybenzoate (3,4-AHBA) to 3-amino-2,4-dihydroxybenzoate (3,2,4-ADHBA). The protein is 3-amino-4-hydroxybenzoate 2-monooxygenase PtmB3 of Streptomyces platensis.